A 366-amino-acid polypeptide reads, in one-letter code: uncharacterized protein (366 aa).

It to B.subtilis XkdV.

This is an uncharacterized protein from Bacillus subtilis (strain 168).